Here is a 392-residue protein sequence, read N- to C-terminus: CD2 homolog (392 aa).

Positions 1–16 (MIIKLIFLICFKIVLS) are cleaved as a signal peptide. Residues 17-222 (IDNKTKFNET…YLDFFQVTSY (206 aa)) lie on the Extracellular side of the membrane. 10 N-linked (GlcNAc...) asparagine; by host glycosylation sites follow: Asn39, Asn88, Asn92, Asn106, Asn148, Asn159, Asn183, Asn191, Asn198, and Asn204. Disulfide bonds link Cys137-Cys205 and Cys144-Cys188. Residues 223-243 (IFYMIIFIVTGITVSILISII) traverse the membrane as a helical segment. The Cytoplasmic portion of the chain corresponds to 244 to 392 (TFLFIRKRKH…ISLIHVDRII (149 aa)). A disordered region spans residues 258–290 (ESPPPESNEEEQQCHHDTTSIHEPSPREPLLPK). Over residues 269 to 283 (QQCHHDTTSIHEPSP) the composition is skewed to basic and acidic residues. Tandem repeats lie at residues 319–324 (KPCPPP), 325–330 (KPCPPP), 331–336 (KPCPPP), 337–342 (KPCPPS), and 343–348 (KPCPPP). The interval 319–348 (KPCPPPKPCPPPKPCPPPKPCPPSKPCPPP) is 5 X 6 AA tandem repeats of K-P-C-[PRS]-[P]-[PS]. The interval 328 to 357 (PPPKPCPPPKPCPPSKPCPPPEPYSPPKPC) is disordered.

It belongs to the asfivirus CD2 homolog protein family. As to quaternary structure, both glycosylated and nonglycosylated forms interact (via C-terminus) with the host AP-1 complex. In terms of processing, cleaved into two fragments of 63 kDa and 26 kDa containing respectively the glycosylated N-terminus and the nonglycosylated C-terminus. A full-length 89-kDa glycosylated form also exists.

Its subcellular location is the host cell membrane. The protein localises to the virion membrane. The protein resides in the host Golgi apparatus. Its function is as follows. May play an immunosuppressive role by inhibiting lymphocyte proliferation and subsequently facilitating viral replication and generalization of infection. Responsible for viral hemadsorption, which may help viral spread. Increases virus replication in the tick vector at the step of virus uptake or replication in the tick gut. May play a role in the host Golgi reorganization to yield viral factories. May play a role in host cell penetration. The polypeptide is CD2 homolog (Ornithodoros (relapsing fever ticks)).